Here is a 135-residue protein sequence, read N- to C-terminus: MDYKVKVRYLRIGRRKVARLLPFVKGEYVNHAISNLATMPQMSSVVLRKAIKSGIANAIFQSRNINPDTLWVKTAFVDKAPTLKRIRAASRGSADPILKRLSHITIILSDDKKPEKKKLKAKSAKTEEAPKAAEV.

The interval 112-135 (KKPEKKKLKAKSAKTEEAPKAAEV) is disordered. Positions 124–135 (AKTEEAPKAAEV) are enriched in basic and acidic residues.

The protein belongs to the universal ribosomal protein uL22 family. As to quaternary structure, part of the 50S ribosomal subunit.

This protein binds specifically to 23S rRNA; its binding is stimulated by other ribosomal proteins, e.g. L4, L17, and L20. It is important during the early stages of 50S assembly. It makes multiple contacts with different domains of the 23S rRNA in the assembled 50S subunit and ribosome. Its function is as follows. The globular domain of the protein is located near the polypeptide exit tunnel on the outside of the subunit, while an extended beta-hairpin is found that lines the wall of the exit tunnel in the center of the 70S ribosome. This chain is Large ribosomal subunit protein uL22, found in Brachyspira hyodysenteriae (strain ATCC 49526 / WA1).